The following is a 369-amino-acid chain: P2X receptor B (369 aa).

Residues 1-25 (MTIDWDSILSYNTIKVVRIRDRRLG) are Cytoplasmic-facing. Residues 26-46 (ILHLCFLIVIVLYVVVYSAII) traverse the membrane as a helical segment. Residues 47–369 (KKGYVTTEEP…DKLYHNIEAL (323 aa)) lie on the Lumenal side of the membrane. The segment at 283 to 296 (RHAIRLIFIQTGVI) is pore-forming motif.

The protein belongs to the P2X receptor family.

It is found in the contractile vacuole membrane. Functionally, P2X receptors are ATP-gated ion channels that play a role in intracellular calcium signaling. Not required for the purinergic response to extracellular nucleotides. Not essential for osmoregulation. Inward currents are evoked by intracellular ATP and ATP analogs. Insensitive to the P2 receptor antagonists PPADS and suramin, and also copper ions. Inhibited by sodium ions. Permeable to chloride ions. The polypeptide is P2X receptor B (p2xB) (Dictyostelium discoideum (Social amoeba)).